A 140-amino-acid polypeptide reads, in one-letter code: uncharacterized protein (140 aa).

This is an uncharacterized protein from Escherichia coli (strain K12).